The following is a 320-amino-acid chain: Lipoyl synthase (320 aa).

[4Fe-4S] cluster-binding residues include Cys67, Cys72, Cys78, Cys93, Cys97, Cys100, and Ser307. The 218-residue stretch at 79–296 folds into the Radical SAM core domain; sequence FNHGTATFMI…REKANEMGFE (218 aa).

It belongs to the radical SAM superfamily. Lipoyl synthase family. [4Fe-4S] cluster is required as a cofactor.

The protein resides in the cytoplasm. The catalysed reaction is [[Fe-S] cluster scaffold protein carrying a second [4Fe-4S](2+) cluster] + N(6)-octanoyl-L-lysyl-[protein] + 2 oxidized [2Fe-2S]-[ferredoxin] + 2 S-adenosyl-L-methionine + 4 H(+) = [[Fe-S] cluster scaffold protein] + N(6)-[(R)-dihydrolipoyl]-L-lysyl-[protein] + 4 Fe(3+) + 2 hydrogen sulfide + 2 5'-deoxyadenosine + 2 L-methionine + 2 reduced [2Fe-2S]-[ferredoxin]. It participates in protein modification; protein lipoylation via endogenous pathway; protein N(6)-(lipoyl)lysine from octanoyl-[acyl-carrier-protein]: step 2/2. Catalyzes the radical-mediated insertion of two sulfur atoms into the C-6 and C-8 positions of the octanoyl moiety bound to the lipoyl domains of lipoate-dependent enzymes, thereby converting the octanoylated domains into lipoylated derivatives. The chain is Lipoyl synthase from Glaesserella parasuis serovar 5 (strain SH0165) (Haemophilus parasuis).